The chain runs to 540 residues: Chaperonin GroEL (540 aa).

ATP is bound by residues 30–33 (TLGP), Lys-51, 87–91 (DGTTT), Gly-415, and Asp-495.

This sequence belongs to the chaperonin (HSP60) family. In terms of assembly, forms a cylinder of 14 subunits composed of two heptameric rings stacked back-to-back. Interacts with the co-chaperonin GroES.

The protein resides in the cytoplasm. The catalysed reaction is ATP + H2O + a folded polypeptide = ADP + phosphate + an unfolded polypeptide.. Functionally, together with its co-chaperonin GroES, plays an essential role in assisting protein folding. The GroEL-GroES system forms a nano-cage that allows encapsulation of the non-native substrate proteins and provides a physical environment optimized to promote and accelerate protein folding. The protein is Chaperonin GroEL of Serratia marcescens.